Here is a 303-residue protein sequence, read N- to C-terminus: Movement protein (303 aa).

Polar residues predominate over residues 1-18; that stretch reads MSNIVSPFSGSSRTTSDV. 2 disordered regions span residues 1 to 24 and 267 to 303; these read MSNI…QAGG and EESE…LRIK.

This sequence belongs to the bromovirus movement protein family. Phosphorylated by host.

The protein localises to the host cell junction. Its subcellular location is the host plasmodesma. Transports viral genome to neighboring plant cells directly through plasmosdesmata, without any budding. The movement protein allows efficient cell to cell propagation, by bypassing the host cell wall barrier. Acts by forming a tubular structure at the host plasmodesmata, enlarging it enough to allow free passage of virion capsids. In Brome mosaic virus (BMV), this protein is Movement protein.